The following is a 40-amino-acid chain: Dolichyl-diphosphooligosaccharide--protein glycosyltransferase subunit 4 (40 aa).

Residues 1-4 are Lumenal-facing; that stretch reads MITD. A helical transmembrane segment spans residues 5-25; sequence VQLAIFSNVLGVFLFLLVVAY. Residues 26 to 40 are Cytoplasmic-facing; the sequence is HYINANTGKSSIKTK.

This sequence belongs to the OST4 family. As to quaternary structure, component of the oligosaccharyltransferase (OST) complex.

It is found in the endoplasmic reticulum membrane. Its function is as follows. Subunit of the oligosaccharyl transferase (OST) complex that catalyzes the initial transfer of a defined glycan (Glc(3)Man(9)GlcNAc(2) in eukaryotes) from the lipid carrier dolichol-pyrophosphate to an asparagine residue within an Asn-X-Ser/Thr consensus motif in nascent polypeptide chains, the first step in protein N-glycosylation. N-glycosylation occurs cotranslationally and the complex associates with the Sec61 complex at the channel-forming translocon complex that mediates protein translocation across the endoplasmic reticulum (ER). All subunits are required for a maximal enzyme activity. The chain is Dolichyl-diphosphooligosaccharide--protein glycosyltransferase subunit 4 from Drosophila virilis (Fruit fly).